Consider the following 95-residue polypeptide: Exodeoxyribonuclease 7 small subunit (95 aa).

The span at 62–83 (LTKDESKKTNKTGFRGESKTTE) shows a compositional bias: basic and acidic residues. Residues 62–95 (LTKDESKKTNKTGFRGESKTTETKNNTAQEEDLF) form a disordered region.

Belongs to the XseB family. In terms of assembly, heterooligomer composed of large and small subunits.

Its subcellular location is the cytoplasm. It catalyses the reaction Exonucleolytic cleavage in either 5'- to 3'- or 3'- to 5'-direction to yield nucleoside 5'-phosphates.. In terms of biological role, bidirectionally degrades single-stranded DNA into large acid-insoluble oligonucleotides, which are then degraded further into small acid-soluble oligonucleotides. The polypeptide is Exodeoxyribonuclease 7 small subunit (Leptospira interrogans serogroup Icterohaemorrhagiae serovar copenhageni (strain Fiocruz L1-130)).